The following is a 103-amino-acid chain: Putative membrane protein insertion efficiency factor (103 aa).

It belongs to the UPF0161 family.

It localises to the cell inner membrane. In terms of biological role, could be involved in insertion of integral membrane proteins into the membrane. The protein is Putative membrane protein insertion efficiency factor of Chlamydia felis (strain Fe/C-56) (Chlamydophila felis).